The chain runs to 219 residues: Probable nicotinate-nucleotide adenylyltransferase (219 aa).

This sequence belongs to the NadD family.

It catalyses the reaction nicotinate beta-D-ribonucleotide + ATP + H(+) = deamido-NAD(+) + diphosphate. It functions in the pathway cofactor biosynthesis; NAD(+) biosynthesis; deamido-NAD(+) from nicotinate D-ribonucleotide: step 1/1. Catalyzes the reversible adenylation of nicotinate mononucleotide (NaMN) to nicotinic acid adenine dinucleotide (NaAD). The sequence is that of Probable nicotinate-nucleotide adenylyltransferase from Enterococcus faecalis (strain ATCC 700802 / V583).